Here is a 515-residue protein sequence, read N- to C-terminus: Arabinose import ATP-binding protein AraG 2 (515 aa).

Residues 1 to 22 (MTMQTMTAASGHDAEAGTPPDG) form a disordered region. ABC transporter domains lie at 25 to 260 (LALD…MVGR) and 260 to 511 (RSIE…LIKL). 57-64 (GENGAGKS) is a binding site for ATP.

It belongs to the ABC transporter superfamily. Arabinose importer (TC 3.A.1.2.2) family. As to quaternary structure, the complex is composed of two ATP-binding proteins (AraG), two transmembrane proteins (AraH) and a solute-binding protein (AraF).

The protein localises to the cell inner membrane. The enzyme catalyses L-arabinose(out) + ATP + H2O = L-arabinose(in) + ADP + phosphate + H(+). In terms of biological role, part of the ABC transporter complex AraFGH involved in arabinose import. Responsible for energy coupling to the transport system. This is Arabinose import ATP-binding protein AraG 2 from Burkholderia cenocepacia (strain HI2424).